Here is a 505-residue protein sequence, read N- to C-terminus: MDPENKKSATGAAAILDLDPDFEPQSRPRSCTWPLPRPDLATEPHEPSEVEPSLGQKVPTEGHSEPILLPSRLPEPAGGPQPGILGAVTGPRKGGSRRNAWGNQSYAELISQAIESAPEKRLTLAQIYEWMVRTVPYFKDKGDSNSSAGWKNSIRHNLSLHSKFIKVHNEATGKSSWWMLNPDGGKGGKAPRRRAASMDSSSKLLRGRSKGPKKKPSVLPAPPEGATPRSPLGHFAKWSSSPCPRNREEADVWTTFRPRSSSNASTVSTRLSPMRPESEVLAEEEMPASASSYAGGVPPTLSEDLELLDGLNLASPHSLLSRSGLSGFSLQHPGLAGPLHSYGASLFGPIDGSLSAGEGCFSSSQSLEALLTSDTPPPPADVLMTQVDPILSQAPTLLLLGGMPSSSKLGTGVSLCPTPLEGPGPSNLVPNLSVMAPPPVMAGAPIPKVLGTPVLASPTEDSSHDRMPQDLDLDMYMENLECDMDNIISDLMDGEGLDFNFEPDP.

3 disordered regions span residues M1–P66, S175–P244, and R257–P276. T32 carries the post-translational modification Phosphothreonine; by PKB/AKT1. The interval R97 to K215 is required for interaction with FOXK1. The fork-head DNA-binding region spans A100–G188. S197 is modified (phosphoserine; by PKB/AKT1). Over residues L205–P216 the composition is skewed to basic residues. Residues R257–L271 show a composition bias toward polar residues. S262 carries the phosphoserine; by PKB/AKT1 modification.

In terms of assembly, interacts with CREBBP/CBP, MYOCD, SIRT1, SRF and YWHAZ. Acetylated by CREBBP/CBP and deacetylated by SIRT1. Binding of YWHAZ inhibits DNA-binding. Interacts with USP7; the interaction is enhanced in presence of hydrogen peroxide and occurs independently of TP53. Interacts with NLK, and this inhibits monoubiquitination and transcriptional activity. Interacts with FOXK1; the interaction inhibits MEF2C transactivation activity. In terms of processing, acetylation by CREBBP/CBP is induced by oxidative stress and inhibits transcriptional activity. Deacetylation by SIRT1 is NAD-dependent and stimulates transcriptional activity. Phosphorylation by PKB/AKT1 inhibits transcriptional activity and is responsible for cytoplasmic localization. May be phosphorylated at multiple sites by NLK. Post-translationally, monoubiquitinated; monoubiquitination is induced by oxidative stress and reduced by deacetylase inhibitors; results in its relocalization to the nucleus and its increased transcriptional activity. Deubiquitinated by USP7; deubiquitination is induced by oxidative stress; enhances its interaction with USP7 and consequently, deubiquitination; increases its translocation to the cytoplasm and inhibits its transcriptional activity. Hydrogene-peroxide-induced ubiquitination and USP7-mediated deubiquitination have no major effect on its protein stability. Strongly expressed in brown adipose tissue and weakly in white adipose tissue (at protein level). Expressed in skeletal muscle.

The protein resides in the cytoplasm. It is found in the nucleus. Its function is as follows. Transcription factor involved in the regulation of the insulin signaling pathway. Binds to insulin-response elements (IREs) and can activate transcription of IGFBP1. Down-regulates expression of HIF1A and suppresses hypoxia-induced transcriptional activation of HIF1A-modulated genes. Also involved in negative regulation of the cell cycle. Involved in increased proteasome activity in embryonic stem cells (ESCs) by activating expression of PSMD11 in ESCs, leading to enhanced assembly of the 26S proteasome, followed by higher proteasome activity. Represses smooth muscle cell differentiation by inhibiting the transcriptional coactivator activity of myocardin. In Mus musculus (Mouse), this protein is Forkhead box protein O4 (Foxo4).